We begin with the raw amino-acid sequence, 169 residues long: Oleosin Ara h 10.0101 (169 aa).

2 helical membrane passes run 39-59 and 73-93; these read VIAV…AGLA and LFIL…LSVA. Over residues 146–156 the composition is skewed to basic and acidic residues; the sequence is KDVGQKTKEVG. The tract at residues 146–169 is disordered; it reads KDVGQKTKEVGQEIQTKAQDSKRT.

It belongs to the oleosin family. In terms of tissue distribution, expressed in seeds (at protein level).

The protein resides in the lipid droplet. It localises to the membrane. Functionally, may have a structural role to stabilize the lipid body during desiccation of the seed by preventing coalescence of the oil. Probably interacts with both lipid and phospholipid moieties of lipid bodies. May also provide recognition signals for specific lipase anchorage in lipolysis during seedling growth. The protein is Oleosin Ara h 10.0101 of Arachis hypogaea (Peanut).